The chain runs to 1130 residues: Alpha-mannosidase 2 (1130 aa).

The Cytoplasmic segment spans residues 1 to 14; that stretch reads MRTRVLRCRPFSTR. The helical; Signal-anchor for type II membrane protein transmembrane segment at 15-35 threads the bilayer; that stretch reads ILLLLLFVLAFGVYCYFYNAS. The Lumenal portion of the chain corresponds to 36–1130; sequence PQNYNKPRIS…MEVKTYKIRF (1095 aa). N-linked (GlcNAc...) asparagine glycosylation occurs at N117. Zn(2+)-binding residues include H133 and D135. N166 is a glycosylation site (N-linked (GlcNAc...) asparagine). Zn(2+)-binding residues include D247 and H527. The active-site Nucleophile is the D247. 4 N-linked (GlcNAc...) asparagine glycosylation sites follow: N622, N683, N1056, and N1095.

Belongs to the glycosyl hydrolase 38 family. As to quaternary structure, homodimer; disulfide-linked. The cofactor is Zn(2+). In terms of processing, N-glycosylated.

It is found in the microsome membrane. The protein resides in the golgi apparatus membrane. The catalysed reaction is N(4)-{beta-D-GlcNAc-(1-&gt;2)-alpha-D-Man-(1-&gt;3)-[alpha-D-Man-(1-&gt;3)-[alpha-D-Man-(1-&gt;6)]-alpha-D-Man-(1-&gt;6)]-beta-D-Man-(1-&gt;4)-beta-D-GlcNAc-(1-&gt;4)-beta-D-GlcNAc}-L-asparaginyl-[protein] + 2 H2O = 2 alpha-D-mannopyranose + an N(4)-{beta-D-GlcNAc-(1-&gt;2)-alpha-D-Man-(1-&gt;3)-[alpha-D-Man-(1-&gt;6)]-beta-D-Man-(1-&gt;4)-beta-D-GlcNAc-(1-&gt;4)-beta-D-GlcNAc}-L-asparaginyl-[protein]. The protein operates within protein modification; protein glycosylation. With respect to regulation, inhibited by swainsonine. Catalyzes the first committed step in the biosynthesis of complex N-glycans. It controls conversion of high mannose to complex N-glycans; the final hydrolytic step in the N-glycan maturation pathway. This Spodoptera frugiperda (Fall armyworm) protein is Alpha-mannosidase 2.